The sequence spans 165 residues: Cytochrome c-type biogenesis protein CcmE (165 aa).

At 1–29 the chain is on the cytoplasmic side; that stretch reads MSATAEQNARNPKGKGGFARTVSQRKRKR. A helical; Signal-anchor for type II membrane protein transmembrane segment spans residues 30–50; it reads LFLIGGALAVLAVAVGLMLTA. The Periplasmic segment spans residues 51 to 165; the sequence is FNQDIRFFRT…LKKKGVWEGK (115 aa). Heme contacts are provided by His143 and Tyr147.

The protein belongs to the CcmE/CycJ family.

It localises to the cell inner membrane. In terms of biological role, heme chaperone required for the biogenesis of c-type cytochromes. Transiently binds heme delivered by CcmC and transfers the heme to apo-cytochromes in a process facilitated by CcmF and CcmH. The chain is Cytochrome c-type biogenesis protein CcmE from Brucella abortus (strain S19).